The primary structure comprises 92 residues: Kinetoplastid membrane protein 11 (92 aa).

The protein belongs to the KMP-11 family. In terms of assembly, monomer.

The protein localises to the cytoplasm. The protein resides in the cytoskeleton. In terms of biological role, may be involved in the regulation of the cytoskeleton through interaction with the subpellicular microtubules. May be involved in parasite mobility and attachment to the surface of the host cell. Behaves as a strong immunogen during infection. This chain is Kinetoplastid membrane protein 11 (KMP-11/1), found in Trypanosoma brucei brucei.